Reading from the N-terminus, the 162-residue chain is Regulatory protein RecX (162 aa).

This sequence belongs to the RecX family.

The protein localises to the cytoplasm. Its function is as follows. Modulates RecA activity. The chain is Regulatory protein RecX from Xanthomonas campestris pv. campestris (strain 8004).